The sequence spans 657 residues: Heat shock protein hsp-6 (657 aa).

The transit peptide at 1-27 (MLSARSFLSSARTIARSSLMSARSLSD) directs the protein to the mitochondrion. Residues 637–657 (KNSGGDAQEAKTAEEPKKEQN) are disordered. Over residues 644-657 (QEAKTAEEPKKEQN) the composition is skewed to basic and acidic residues.

Belongs to the heat shock protein 70 family.

The protein resides in the mitochondrion. In Caenorhabditis elegans, this protein is Heat shock protein hsp-6.